The following is a 1673-amino-acid chain: NBPF family member NBPF26 (1673 aa).

4 EGF-like domains span residues 24–63 (HALQ…EYCQ), 64–102 (HRDP…EDCQ), 105–143 (TPHP…KECQ), and 144–180 (WTDA…QKCE). Disulfide bonds link Cys28-Cys41, Cys35-Cys51, Cys53-Cys62, Cys68-Cys79, Cys73-Cys90, Cys92-Cys101, Cys109-Cys121, Cys115-Cys131, Cys133-Cys142, Cys148-Cys159, Cys153-Cys168, Cys170-Cys179, Cys186-Cys198, Cys192-Cys207, Cys209-Cys218, Cys225-Cys236, and Cys230-Cys246. The 38-residue stretch at 182–219 (DVNECDIPGHCQHGGTCLNLPGSYQCQCLQGFTGQYCD) folds into the EGF-like 5; calcium-binding domain. The EGF-like 6 domain occupies 221–258 (LYVPCAHSPCVNGGTCRQTGDFTFECNCLPVPDSTSSA). Residues 337–381 (RQFKEEKLAEQLKQAEELRQYKVLVHSQERELTQLKEKLREGRDA) adopt a coiled-coil conformation. 3 disordered regions span residues 423–463 (KLSP…KVPE), 713–734 (EKVQ…EVPE), and 782–828 (WEDA…EGYS). The span at 427–443 (ENDEDEDEDVQVEEDEK) shows a compositional bias: acidic residues. 13 Olduvai domains span residues 427–521 (ENDE…NILP), 698–790 (ENDN…HIIP), 791–879 (ENES…ATGP), 882–937 (SREL…VDMD), 938–1029 (EIEK…PSCP), 1032–1104 (SGEL…PSCP), 1107–1162 (SREL…LDVD), 1163–1255 (RIKK…RSKK), 1256–1348 (ERRR…PSCP), 1351–1423 (SREL…PSCP), 1426–1481 (SREL…LDVD), 1482–1574 (RIKK…RSKK), and 1575–1673 (ERRR…IFPQ). Positions 452 to 463 (EVQKTEESKVPE) are enriched in basic and acidic residues. Composition is skewed to acidic residues over residues 792 to 801 (NESDDEEEEE) and 812 to 824 (ESEE…ESWD). Residues 1242 to 1280 (KGKGKKRRGRRSKKERRRGRKEGEEDQNPPCPRLSRELL) are disordered. Positions 1243-1261 (GKGKKRRGRRSKKERRRGR) are enriched in basic residues. Positions 1561–1594 (KGKGKKRRGRRSKKERRRGRKEGEEDQNPPCPRL) are disordered. Over residues 1562 to 1580 (GKGKKRRGRRSKKERRRGR) the composition is skewed to basic residues.

This sequence belongs to the NBPF family.

It localises to the cytoplasm. The polypeptide is NBPF family member NBPF26 (Homo sapiens (Human)).